Here is a 450-residue protein sequence, read N- to C-terminus: Enolase (450 aa).

Q167 is a (2R)-2-phosphoglycerate binding site. Residue E209 is the Proton donor of the active site. Residues D250, E307, and D334 each coordinate Mg(2+). K359, R388, S389, and K410 together coordinate (2R)-2-phosphoglycerate. The active-site Proton acceptor is K359.

It belongs to the enolase family. Requires Mg(2+) as cofactor.

Its subcellular location is the cytoplasm. The protein resides in the secreted. The protein localises to the cell surface. The enzyme catalyses (2R)-2-phosphoglycerate = phosphoenolpyruvate + H2O. The protein operates within carbohydrate degradation; glycolysis; pyruvate from D-glyceraldehyde 3-phosphate: step 4/5. Its function is as follows. Catalyzes the reversible conversion of 2-phosphoglycerate (2-PG) into phosphoenolpyruvate (PEP). It is essential for the degradation of carbohydrates via glycolysis. Functionally, 'Moonlights' as a plasminogen receptor and plasmin activator. Contributes to host (pig) cell adhesion; anti-enolase antibodies decrease binding to porcine kidney cells about 60%. Binds host plasminogen and fibronectin in vitro; enhances the activity of host tissue-specific plasminogen activator (tPA), and helps plasminogen and tPA degrade articifial host extracellular matrices. The polypeptide is Enolase (Mesomycoplasma hyorhinis (strain HUB-1) (Mycoplasma hyorhinis)).